We begin with the raw amino-acid sequence, 511 residues long: Maturase K (511 aa).

It belongs to the intron maturase 2 family. MatK subfamily.

Its subcellular location is the plastid. The protein resides in the chloroplast. Functionally, usually encoded in the trnK tRNA gene intron. Probably assists in splicing its own and other chloroplast group II introns. This chain is Maturase K, found in Lolium perenne (Perennial ryegrass).